We begin with the raw amino-acid sequence, 176 residues long: dCTP deaminase (176 aa).

Residues 102 to 107 (RSTFAR) and D118 contribute to the dCTP site. The active-site Proton donor/acceptor is E128. 3 residues coordinate dCTP: Y160, K166, and Q167.

Belongs to the dCTP deaminase family. In terms of assembly, homotrimer.

The enzyme catalyses dCTP + H2O + H(+) = dUTP + NH4(+). It participates in pyrimidine metabolism; dUMP biosynthesis; dUMP from dCTP (dUTP route): step 1/2. In terms of biological role, catalyzes the deamination of dCTP to dUTP. The chain is dCTP deaminase from Staphylothermus marinus (strain ATCC 43588 / DSM 3639 / JCM 9404 / F1).